The sequence spans 580 residues: Netrin-3 (580 aa).

The signal sequence occupies residues 1–27; it reads MPGWPWGLLLTAGTLFAALSPGPPAPA. Positions 36–254 constitute a Laminin N-terminal domain; that stretch reads APRGCVPGLV…AATDLQVGGR (219 aa). The disordered stretch occupies residues 62-83; the sequence is PATRACDASDPRRAHSPALLTS. Intrachain disulfides connect Cys-92–Cys-125, Cys-255–Cys-264, Cys-257–Cys-274, Cys-276–Cys-285, Cys-288–Cys-308, Cys-311–Cys-320, Cys-313–Cys-338, Cys-341–Cys-350, Cys-353–Cys-371, Cys-374–Cys-386, Cys-376–Cys-393, Cys-395–Cys-404, Cys-407–Cys-421, Cys-441–Cys-514, and Cys-460–Cys-577. The N-linked (GlcNAc...) asparagine glycan is linked to Asn-104. 3 Laminin EGF-like domains span residues 255-308, 311-371, and 374-421; these read CKCN…SHAC, CSCN…RRAC, and CDCH…VAPC. N-linked (GlcNAc...) asparagine glycosylation is present at Asn-387. The region spanning 441–577 is the NTR domain; the sequence is CDSHCKPARG…LQRRERRGRC (137 aa). Positions 500–502 match the Cell attachment site; atypical motif; it reads RGS.

In terms of tissue distribution, spinal cord.

It localises to the secreted. It is found in the extracellular space. Its subcellular location is the extracellular matrix. Functionally, netrins control guidance of CNS commissural axons and peripheral motor axons. The protein is Netrin-3 (NTN3) of Homo sapiens (Human).